The following is a 123-amino-acid chain: Small ribosomal subunit protein uS12 (123 aa).

Basic residues predominate over residues 10–20 (KGRKKVKKKKT). The disordered stretch occupies residues 10–32 (KGRKKVKKKKTAPALQGSPQKRG). Aspartate 89 is modified (3-methylthioaspartic acid).

Belongs to the universal ribosomal protein uS12 family. As to quaternary structure, part of the 30S ribosomal subunit. Contacts proteins S8 and S17. May interact with IF1 in the 30S initiation complex.

Its function is as follows. With S4 and S5 plays an important role in translational accuracy. In terms of biological role, interacts with and stabilizes bases of the 16S rRNA that are involved in tRNA selection in the A site and with the mRNA backbone. Located at the interface of the 30S and 50S subunits, it traverses the body of the 30S subunit contacting proteins on the other side and probably holding the rRNA structure together. The combined cluster of proteins S8, S12 and S17 appears to hold together the shoulder and platform of the 30S subunit. The sequence is that of Small ribosomal subunit protein uS12 from Halothermothrix orenii (strain H 168 / OCM 544 / DSM 9562).